The sequence spans 518 residues: Putative ribose/galactose/methyl galactoside import ATP-binding protein (518 aa).

The disordered stretch occupies residues Met-1–Pro-22. Residues Arg-12–Pro-22 show a composition bias toward polar residues. ABC transporter domains are found at residues Leu-29–Glu-265 and Val-275–Leu-515. Gly-61–Ser-68 serves as a coordination point for ATP.

This sequence belongs to the ABC transporter superfamily. Carbohydrate importer 2 (CUT2) (TC 3.A.1.2) family.

It localises to the cell inner membrane. It carries out the reaction D-ribose(out) + ATP + H2O = D-ribose(in) + ADP + phosphate + H(+). The catalysed reaction is D-galactose(out) + ATP + H2O = D-galactose(in) + ADP + phosphate + H(+). Its function is as follows. Part of an ABC transporter complex involved in carbohydrate import. Could be involved in ribose, galactose and/or methyl galactoside import. Responsible for energy coupling to the transport system. The sequence is that of Putative ribose/galactose/methyl galactoside import ATP-binding protein from Ralstonia nicotianae (strain ATCC BAA-1114 / GMI1000) (Ralstonia solanacearum).